We begin with the raw amino-acid sequence, 566 residues long: Protein RocB (566 aa).

Involved in arginine degradative pathway. This is Protein RocB (rocB) from Bacillus subtilis (strain 168).